Reading from the N-terminus, the 441-residue chain is Glutamate--tRNA ligase 2 (441 aa).

The 'HIGH' region motif lies at P9–N19. The 'KMSKS' region signature appears at A239–R243. Residue K242 coordinates ATP.

The protein belongs to the class-I aminoacyl-tRNA synthetase family. Glutamate--tRNA ligase type 1 subfamily. Monomer.

It is found in the cytoplasm. The enzyme catalyses tRNA(Glu) + L-glutamate + ATP = L-glutamyl-tRNA(Glu) + AMP + diphosphate. In terms of biological role, catalyzes the attachment of glutamate to tRNA(Glu) in a two-step reaction: glutamate is first activated by ATP to form Glu-AMP and then transferred to the acceptor end of tRNA(Glu). This Cereibacter sphaeroides (strain ATCC 17029 / ATH 2.4.9) (Rhodobacter sphaeroides) protein is Glutamate--tRNA ligase 2.